A 1256-amino-acid chain; its full sequence is Centrosome and spindle pole-associated protein 1 (1256 aa).

Coiled-coil stretches lie at residues 38–62 (ADNLDEFIEEQKARLAEDKAELESD) and 114–135 (EDYERKKHKLKEELRQDYRRYL). A compositionally biased stretch (basic and acidic residues) spans 189–208 (GKEESSEKFRQVEKSTEPKS). Disordered regions lie at residues 189 to 244 (GKEE…LTPS) and 381 to 403 (AENKSAPDNETSKSANQDTCSPF). The segment covering 222–232 (LTSQIQTSCEN) has biased composition (polar residues). A Phosphoserine modification is found at serine 244. A coiled-coil region spans residues 244–270 (SEAYEELLNQRRLEEDRYRQLDDEIEL). Positions 417-449 (QRRKEKYRLELLEQMAEQQRNKRREKDLELRVA) form a coiled coil. Phosphoserine occurs at positions 459 and 527. Residues 625 to 669 (SKQSLQSYQEALQQQIREREERRKKEREEKEEYEAKLEAEMRTYN) are a coiled coil. 2 disordered regions span residues 735–757 (ANKSSGHMQTQSSPFARGNVFGE) and 813–853 (EYEE…KKEE). A compositionally biased stretch (polar residues) spans 736–748 (NKSSGHMQTQSSP). Residues serine 901 and serine 920 each carry the phosphoserine modification. A disordered region spans residues 913 to 932 (SSMSRAQSPPVPARKNQLRA). Positions 925–964 (ARKNQLRAEEEKKNVIMELSEMRKQLRSEERRLQERLLHM) form a coiled coil. Serine 966 bears the Phosphoserine mark. Disordered regions lie at residues 1114 to 1147 (EDDVLPPPSQLPSARERRRNKWKGLDIDSSRPNV) and 1232 to 1256 (LNQEQQQIPGKPGTFTWQGLSTAHG). A compositionally biased stretch (polar residues) spans 1246–1256 (FTWQGLSTAHG).

Interacts with PLEKHG6. Interacts with ARMC9, TOGARAM1, CCDC66, CEP104 and CEP290. Post-translationally, phosphorylated. Phosphorylation increases in colcemide-treated cells. In terms of tissue distribution, expressed in adult and fetal brain with enrichment in the cerebellum. Detected in testis.

Its subcellular location is the cytoplasm. It localises to the cytoskeleton. The protein localises to the microtubule organizing center. It is found in the centrosome. The protein resides in the spindle. Its subcellular location is the spindle pole. It localises to the cell projection. The protein localises to the cilium. Functionally, may play a role in cell-cycle-dependent microtubule organization. This chain is Centrosome and spindle pole-associated protein 1 (CSPP1), found in Homo sapiens (Human).